A 219-amino-acid chain; its full sequence is Auxin-responsive protein IAA24 (219 aa).

The short motif at 24–28 (LCLRL) is the EAR-like (transcriptional repression) element. 2 disordered regions span residues 24–88 (LCLR…AKAQ) and 109–128 (AAAATKKGGDEKQKQQQQGG). Positions 60–71 (STDSMASGTGTS) are enriched in polar residues. The PB1 domain occupies 129–215 (GLYVKVSMDG…SCKKLRIMKG (87 aa)).

Belongs to the Aux/IAA family. Homodimers and heterodimers. As to expression, highly expressed in flowers. Expressed in seedlings.

The protein localises to the nucleus. In terms of biological role, aux/IAA proteins are short-lived transcriptional factors that function as repressors of early auxin response genes at low auxin concentrations. The polypeptide is Auxin-responsive protein IAA24 (IAA24) (Oryza sativa subsp. japonica (Rice)).